Reading from the N-terminus, the 67-residue chain is ATP synthase subunit c (67 aa).

The next 2 membrane-spanning stretches (helical) occupy residues 6–26 and 46–66; these read ILAL…LVAN and IMGV…TFFV.

This sequence belongs to the ATPase C chain family. As to quaternary structure, F-type ATPases have 2 components, F(1) - the catalytic core - and F(0) - the membrane proton channel. F(1) has five subunits: alpha(3), beta(3), gamma(1), delta(1), epsilon(1). F(0) has three main subunits: a(1), b(2) and c(10-14). The alpha and beta chains form an alternating ring which encloses part of the gamma chain. F(1) is attached to F(0) by a central stalk formed by the gamma and epsilon chains, while a peripheral stalk is formed by the delta and b chains.

The protein localises to the cell membrane. Functionally, f(1)F(0) ATP synthase produces ATP from ADP in the presence of a proton or sodium gradient. F-type ATPases consist of two structural domains, F(1) containing the extramembraneous catalytic core and F(0) containing the membrane proton channel, linked together by a central stalk and a peripheral stalk. During catalysis, ATP synthesis in the catalytic domain of F(1) is coupled via a rotary mechanism of the central stalk subunits to proton translocation. Its function is as follows. Key component of the F(0) channel; it plays a direct role in translocation across the membrane. A homomeric c-ring of between 10-14 subunits forms the central stalk rotor element with the F(1) delta and epsilon subunits. The chain is ATP synthase subunit c from Streptococcus mutans serotype c (strain ATCC 700610 / UA159).